Consider the following 325-residue polypeptide: DNA-directed RNA polymerase subunit alpha (325 aa).

The alpha N-terminal domain (alpha-NTD) stretch occupies residues 1–231 (MQNSLLKPRI…DQLNVFAALE (231 aa)). The segment at 246–325 (VDPILLRPVD…ENWPPAGLEK (80 aa)) is alpha C-terminal domain (alpha-CTD).

This sequence belongs to the RNA polymerase alpha chain family. In terms of assembly, homodimer. The RNAP catalytic core consists of 2 alpha, 1 beta, 1 beta' and 1 omega subunit. When a sigma factor is associated with the core the holoenzyme is formed, which can initiate transcription.

The catalysed reaction is RNA(n) + a ribonucleoside 5'-triphosphate = RNA(n+1) + diphosphate. DNA-dependent RNA polymerase catalyzes the transcription of DNA into RNA using the four ribonucleoside triphosphates as substrates. The sequence is that of DNA-directed RNA polymerase subunit alpha from Janthinobacterium sp. (strain Marseille) (Minibacterium massiliensis).